A 156-amino-acid polypeptide reads, in one-letter code: 6,7-dimethyl-8-ribityllumazine synthase (156 aa).

Residues phenylalanine 22, 57 to 59 (AYE), and 81 to 83 (TVI) each bind 5-amino-6-(D-ribitylamino)uracil. 86–87 (GT) lines the (2S)-2-hydroxy-3-oxobutyl phosphate pocket. Residue histidine 89 is the Proton donor of the active site. Residue phenylalanine 114 participates in 5-amino-6-(D-ribitylamino)uracil binding. Arginine 128 contacts (2S)-2-hydroxy-3-oxobutyl phosphate.

The protein belongs to the DMRL synthase family. Forms an icosahedral capsid composed of 60 subunits, arranged as a dodecamer of pentamers.

It catalyses the reaction (2S)-2-hydroxy-3-oxobutyl phosphate + 5-amino-6-(D-ribitylamino)uracil = 6,7-dimethyl-8-(1-D-ribityl)lumazine + phosphate + 2 H2O + H(+). It functions in the pathway cofactor biosynthesis; riboflavin biosynthesis; riboflavin from 2-hydroxy-3-oxobutyl phosphate and 5-amino-6-(D-ribitylamino)uracil: step 1/2. Catalyzes the formation of 6,7-dimethyl-8-ribityllumazine by condensation of 5-amino-6-(D-ribitylamino)uracil with 3,4-dihydroxy-2-butanone 4-phosphate. This is the penultimate step in the biosynthesis of riboflavin. This Sodalis glossinidius (strain morsitans) protein is 6,7-dimethyl-8-ribityllumazine synthase.